The chain runs to 72 residues: Kappa-conotoxin PVIIA (72 aa).

Positions 1-22 (MKLTCVVIVVVLFLTACQLITA) are cleaved as a signal peptide. Residues 23 to 45 (DDSRRTQKHRALRSTTKLSLSTR) constitute a propeptide that is removed on maturation. 3 disulfides stabilise this stretch: Cys-46–Cys-61, Cys-53–Cys-65, and Cys-60–Cys-71. Residue Pro-49 is modified to 4-hydroxyproline.

This sequence belongs to the conotoxin O1 superfamily. In terms of processing, this toxin is not amidated at the C-terminal Val residue. As to expression, expressed by the venom duct.

The protein resides in the secreted. Its function is as follows. Kappa-conotoxins bind and inhibit voltage-gated potassium channels (Kv). This toxin inhibits the drosophila Shaker channel (IC(50)=57-80 nM). In vivo, when tested in fish, this toxin induces hyperactivity, followed by continuous contraction and extension of major fins, without immobilization or death. Injection of this peptide together with the delta-conotoxin PVIA causes the sudden tetanus of prey (STOP) syndrome, which is a single, lethal 'fin-pop' in envenomed fish. When tested in mice, induces hyperactivity. The sequence is that of Kappa-conotoxin PVIIA from Conus purpurascens (Purple cone).